The primary structure comprises 324 residues: Protease HtpX homolog (324 aa).

The next 2 membrane-spanning stretches (helical) occupy residues 7 to 24 and 29 to 46; these read ALLL…GYLI and GALI…FTYW. His-130 lines the Zn(2+) pocket. Glu-131 is an active-site residue. Residue His-134 coordinates Zn(2+). The next 2 membrane-spanning stretches (helical) occupy residues 145–165 and 172–192; these read ITAT…FFGG and GPGL…AMLV. Glu-201 contacts Zn(2+). Positions 288–305 are enriched in polar residues; the sequence is PASTFSRGAGTAASSGTP. A disordered region spans residues 288 to 324; that stretch reads PASTFSRGAGTAASSGTPRGTGRSPWGGQPRGRGPWG.

Belongs to the peptidase M48B family. Requires Zn(2+) as cofactor.

The protein resides in the cell inner membrane. The sequence is that of Protease HtpX homolog from Rhodopseudomonas palustris (strain TIE-1).